An 85-amino-acid polypeptide reads, in one-letter code: Large ribosomal subunit protein bL27 (85 aa).

The protein belongs to the bacterial ribosomal protein bL27 family.

The protein is Large ribosomal subunit protein bL27 of Persephonella marina (strain DSM 14350 / EX-H1).